The sequence spans 400 residues: Cytoplasmic polyadenylated homeobox-like protein 2 (400 aa).

The segment at 1–29 (MSSQAFPAEEDHHNEERQTKKKRKTKHRH) is disordered. Positions 9 to 18 (EEDHHNEERQ) are enriched in basic and acidic residues. Residues 19-29 (TKKKRKTKHRH) show a composition bias toward basic residues. The segment at residues 24-83 (KTKHRHKFSEELLQELKEIFGENGYPDFTTRKTLANKFDCPVNVINNWFQNNRARLPPEE) is a DNA-binding region (homeobox).

It is found in the nucleus. The polypeptide is Cytoplasmic polyadenylated homeobox-like protein 2 (Homo sapiens (Human)).